The primary structure comprises 155 residues: 3-hydroxyacyl-[acyl-carrier-protein] dehydratase FabZ (155 aa).

H54 is an active-site residue.

This sequence belongs to the thioester dehydratase family. FabZ subfamily.

The protein localises to the cytoplasm. It carries out the reaction a (3R)-hydroxyacyl-[ACP] = a (2E)-enoyl-[ACP] + H2O. Functionally, involved in unsaturated fatty acids biosynthesis. Catalyzes the dehydration of short chain beta-hydroxyacyl-ACPs and long chain saturated and unsaturated beta-hydroxyacyl-ACPs. In Burkholderia mallei (strain NCTC 10247), this protein is 3-hydroxyacyl-[acyl-carrier-protein] dehydratase FabZ.